The chain runs to 154 residues: NADPH-dependent 7-cyano-7-deazaguanine reductase (154 aa).

Residue C52 is the Thioimide intermediate of the active site. D59 serves as the catalytic Proton donor. Substrate contacts are provided by residues V74–S76 and H93–E94.

It belongs to the GTP cyclohydrolase I family. QueF type 1 subfamily.

The protein resides in the cytoplasm. The catalysed reaction is 7-aminomethyl-7-carbaguanine + 2 NADP(+) = 7-cyano-7-deazaguanine + 2 NADPH + 3 H(+). It functions in the pathway tRNA modification; tRNA-queuosine biosynthesis. Its function is as follows. Catalyzes the NADPH-dependent reduction of 7-cyano-7-deazaguanine (preQ0) to 7-aminomethyl-7-deazaguanine (preQ1). The chain is NADPH-dependent 7-cyano-7-deazaguanine reductase from Sinorhizobium medicae (strain WSM419) (Ensifer medicae).